Here is a 328-residue protein sequence, read N- to C-terminus: Fructose-1,6-bisphosphatase class 1 (328 aa).

The Mg(2+) site is built by E91, D110, L112, and D113. Residues 113–116 (DGSS), N205, and 257–259 (YLY) contribute to the substrate site. E277 contacts Mg(2+).

This sequence belongs to the FBPase class 1 family. As to quaternary structure, homotetramer. The cofactor is Mg(2+).

It is found in the cytoplasm. The catalysed reaction is beta-D-fructose 1,6-bisphosphate + H2O = beta-D-fructose 6-phosphate + phosphate. It functions in the pathway carbohydrate biosynthesis; gluconeogenesis. This is Fructose-1,6-bisphosphatase class 1 from Azorhizobium caulinodans (strain ATCC 43989 / DSM 5975 / JCM 20966 / LMG 6465 / NBRC 14845 / NCIMB 13405 / ORS 571).